The following is a 150-amino-acid chain: Large ribosomal subunit protein bL9 (150 aa).

This sequence belongs to the bacterial ribosomal protein bL9 family.

In terms of biological role, binds to the 23S rRNA. This chain is Large ribosomal subunit protein bL9, found in Yersinia enterocolitica serotype O:8 / biotype 1B (strain NCTC 13174 / 8081).